Reading from the N-terminus, the 74-residue chain is Exodeoxyribonuclease 7 small subunit (74 aa).

Belongs to the XseB family. In terms of assembly, heterooligomer composed of large and small subunits.

The protein localises to the cytoplasm. The catalysed reaction is Exonucleolytic cleavage in either 5'- to 3'- or 3'- to 5'-direction to yield nucleoside 5'-phosphates.. In terms of biological role, bidirectionally degrades single-stranded DNA into large acid-insoluble oligonucleotides, which are then degraded further into small acid-soluble oligonucleotides. This Neisseria meningitidis serogroup A / serotype 4A (strain DSM 15465 / Z2491) protein is Exodeoxyribonuclease 7 small subunit.